We begin with the raw amino-acid sequence, 2412 residues long: Centrosomal protein of 295 kDa (2412 aa).

The tract at residues 1–540 (MKRKGMNTKL…KQADQPEVCC (540 aa)) is necessary for centriole targeting and microtubule association. A Phosphoserine modification is found at Ser-13. 5 coiled-coil regions span residues 63–84 (AEELRAKWEEAQSQKIQNLEKL), 114–134 (AERKRKAEVRHKEALKVQKNQ), 209–273 (DAHL…DLAR), 489–535 (RRKQ…QADQ), and 563–592 (HQLLQQNRLHKETVETARKRLLEYQTVLKE). Disordered regions lie at residues 600 to 641 (SALV…YQPV) and 739 to 762 (LDSQQISSEDSENISSKPSEPSPF). Ser-634 bears the Phosphoserine mark. Polar residues predominate over residues 739–757 (LDSQQISSEDSENISSKPS). Positions 811–841 (AQQGDLRFLQEQLELQKKVLQARQEAREKLL) form a coiled coil. Disordered stretches follow at residues 871-891 (SASAESGNFQTSSTKSDATVS), 973-1005 (DTQSKKIQKQPLPANKKGLLPSQSEVSKAQDGS), 1158-1178 (LSSPSQVTDWGTSRGSVSVRS), and 1216-1240 (WVDTEKESFQSSPLTPENPSSQQTG). Composition is skewed to polar residues over residues 993 to 1005 (PSQSEVSKAQDGS), 1158 to 1176 (LSSPSQVTDWGTSRGSVSV), and 1224 to 1240 (FQSSPLTPENPSSQQTG). 2 coiled-coil regions span residues 1300 to 1327 (QQDSLKALQEQLATQREAIIHSRQEAHE) and 1448 to 1493 (QHDD…SKQI). A Phosphoserine modification is found at Ser-1573. 4 disordered regions span residues 1820–1895 (LAHD…LSSV), 1916–1937 (ESFSEQTEHLEQESTNKQEETD), 2028–2048 (DLSSPGTSQEDSDFYQSSESS), and 2089–2111 (TEGSEQSFQQLRPEFSSQESQHA). The segment covering 1836–1868 (SKSHDDNAEAVKVKKSDVEDHAVLSHAVSKEEA) has biased composition (basic and acidic residues). Positions 1885-1895 (QEISQEPLSSV) are enriched in polar residues. Basic and acidic residues predominate over residues 1921 to 1935 (QTEHLEQESTNKQEE). The span at 2089 to 2108 (TEGSEQSFQQLRPEFSSQES) shows a compositional bias: polar residues. Residues 2367 to 2412 (SLQEAFMTRQTLTERSYQRQREIWNKTRLPQTKVSKEKLPTGCTGS) form an ALMS motif region.

As to quaternary structure, interacts (via ALMS motif) with microtubules; this interaction is direct.

The protein resides in the cytoplasm. Its subcellular location is the cytoskeleton. It localises to the microtubule organizing center. The protein localises to the centrosome. It is found in the centriole. The protein resides in the spindle. Functionally, centriole-enriched microtubule-binding protein involved in centriole biogenesis. Essential for the generation of the distal portion of new-born centrioles in a CPAP- and CEP120-mediated elongation dependent manner during the cell cycle S/G2 phase after formation of the initiating cartwheel structure. Required for the recruitment of centriolar proteins, such as POC1B, POC5 and CEP135, into the distal portion of centrioles. Also required for centriole-to-centrosome conversion during mitotic progression, but is dispensable for cartwheel removal or centriole disengagement. Binds to and stabilizes centriolar microtubule. May be involved in ciliogenesis. The chain is Centrosomal protein of 295 kDa from Mus musculus (Mouse).